Consider the following 307-residue polypeptide: Protein Y (307 aa).

It belongs to the ATP-dependent AMP-binding enzyme family.

It functions in the pathway antibiotic biosynthesis; candicidin biosynthesis. May be a p-aminobenzoic acid-CoA ligase that activates PabA to start the biosynthesis of candicidin. The protein is Protein Y of Streptomyces griseus.